The following is a 347-amino-acid chain: Selenide, water dikinase (347 aa).

The active site involves C17. ATP is bound by residues K20 and 48–50; that span reads TRD. D51 provides a ligand contact to Mg(2+). Residues D68, D91, and 139–141 contribute to the ATP site; that span reads GHS. A Mg(2+)-binding site is contributed by D91. D227 is a binding site for Mg(2+).

This sequence belongs to the selenophosphate synthase 1 family. Class I subfamily. In terms of assembly, homodimer. Requires Mg(2+) as cofactor.

It catalyses the reaction hydrogenselenide + ATP + H2O = selenophosphate + AMP + phosphate + 2 H(+). Functionally, synthesizes selenophosphate from selenide and ATP. The polypeptide is Selenide, water dikinase (Cronobacter sakazakii (strain ATCC BAA-894) (Enterobacter sakazakii)).